The primary structure comprises 852 residues: Bifunctional uridylyltransferase/uridylyl-removing enzyme (852 aa).

The interval 1–318 (MPENLSSALE…STPMRVTLRI (318 aa)) is uridylyltransferase. A uridylyl-removing region spans residues 319 to 672 (DDDYIQVNNQ…SRILPQSDSF (354 aa)). Residues 436–558 (VDDHILAVVR…VQTHERLSAL (123 aa)) form the HD domain. ACT domains follow at residues 673-757 (QVMV…SCNR) and 785-852 (SVEI…EQLA).

This sequence belongs to the GlnD family. It depends on Mg(2+) as a cofactor.

The enzyme catalyses [protein-PII]-L-tyrosine + UTP = [protein-PII]-uridylyl-L-tyrosine + diphosphate. It carries out the reaction [protein-PII]-uridylyl-L-tyrosine + H2O = [protein-PII]-L-tyrosine + UMP + H(+). With respect to regulation, uridylyltransferase (UTase) activity is inhibited by glutamine, while glutamine activates uridylyl-removing (UR) activity. Functionally, modifies, by uridylylation and deuridylylation, the PII regulatory proteins (GlnB and homologs), in response to the nitrogen status of the cell that GlnD senses through the glutamine level. Under low glutamine levels, catalyzes the conversion of the PII proteins and UTP to PII-UMP and PPi, while under higher glutamine levels, GlnD hydrolyzes PII-UMP to PII and UMP (deuridylylation). Thus, controls uridylylation state and activity of the PII proteins, and plays an important role in the regulation of nitrogen assimilation and metabolism. This Neisseria gonorrhoeae (strain NCCP11945) protein is Bifunctional uridylyltransferase/uridylyl-removing enzyme.